The primary structure comprises 367 residues: 2-aminoethylphosphonate--pyruvate transaminase (367 aa).

N6-(pyridoxal phosphate)lysine is present on Lys-194.

Belongs to the class-V pyridoxal-phosphate-dependent aminotransferase family. PhnW subfamily. As to quaternary structure, homodimer. It depends on pyridoxal 5'-phosphate as a cofactor.

It carries out the reaction (2-aminoethyl)phosphonate + pyruvate = phosphonoacetaldehyde + L-alanine. Its function is as follows. Involved in phosphonate degradation. The sequence is that of 2-aminoethylphosphonate--pyruvate transaminase from Salmonella choleraesuis (strain SC-B67).